The sequence spans 144 residues: 3-dehydroquinate dehydratase (144 aa).

The Proton acceptor role is filled by Tyr24. Substrate is bound by residues Asn73, His79, and Asp86. The active-site Proton donor is His99. Substrate is bound by residues 100–101 (LS) and Arg110.

Belongs to the type-II 3-dehydroquinase family. In terms of assembly, homododecamer.

The enzyme catalyses 3-dehydroquinate = 3-dehydroshikimate + H2O. It functions in the pathway metabolic intermediate biosynthesis; chorismate biosynthesis; chorismate from D-erythrose 4-phosphate and phosphoenolpyruvate: step 3/7. In terms of biological role, catalyzes a trans-dehydration via an enolate intermediate. The protein is 3-dehydroquinate dehydratase of Shewanella putrefaciens (strain CN-32 / ATCC BAA-453).